We begin with the raw amino-acid sequence, 265 residues long: Mlc titration factor A (265 aa).

The Zn(2+) site is built by His-111, His-148, His-152, and Glu-211.

Belongs to the MtfA family. Interacts with Mlc. Zn(2+) is required as a cofactor.

The protein localises to the cytoplasm. In terms of biological role, involved in the modulation of the activity of the glucose-phosphotransferase system (glucose-PTS). Interacts with the transcriptional repressor Mlc, preventing its interaction with DNA and leading to the modulation of expression of genes regulated by Mlc, including ptsG, which encodes the PTS system glucose-specific EIICB component. Its function is as follows. Shows zinc-dependent metallopeptidase activity. The chain is Mlc titration factor A from Escherichia coli (strain UTI89 / UPEC).